Consider the following 83-residue polypeptide: Large ribosomal subunit protein bL31B (83 aa).

This sequence belongs to the bacterial ribosomal protein bL31 family. Type B subfamily. Part of the 50S ribosomal subunit.

Binds the 23S rRNA. The sequence is that of Large ribosomal subunit protein bL31B from Hydrogenovibrio crunogenus (strain DSM 25203 / XCL-2) (Thiomicrospira crunogena).